The sequence spans 72 residues: ATP synthase subunit c (72 aa).

2 consecutive transmembrane segments (helical) span residues 1 to 21 (MSLG…GAGI) and 49 to 69 (FIGV…AFIV).

Belongs to the ATPase C chain family. F-type ATPases have 2 components, F(1) - the catalytic core - and F(0) - the membrane proton channel. F(1) has five subunits: alpha(3), beta(3), gamma(1), delta(1), epsilon(1). F(0) has three main subunits: a(1), b(2) and c(10-14). The alpha and beta chains form an alternating ring which encloses part of the gamma chain. F(1) is attached to F(0) by a central stalk formed by the gamma and epsilon chains, while a peripheral stalk is formed by the delta and b chains.

The protein resides in the cell membrane. In terms of biological role, f(1)F(0) ATP synthase produces ATP from ADP in the presence of a proton or sodium gradient. F-type ATPases consist of two structural domains, F(1) containing the extramembraneous catalytic core and F(0) containing the membrane proton channel, linked together by a central stalk and a peripheral stalk. During catalysis, ATP synthesis in the catalytic domain of F(1) is coupled via a rotary mechanism of the central stalk subunits to proton translocation. Key component of the F(0) channel; it plays a direct role in translocation across the membrane. A homomeric c-ring of between 10-14 subunits forms the central stalk rotor element with the F(1) delta and epsilon subunits. This chain is ATP synthase subunit c, found in Bacillus anthracis (strain A0248).